Here is a 360-residue protein sequence, read N- to C-terminus: Photosystem II protein D1 (360 aa).

Transmembrane regions (helical) follow at residues 30–47 (YVGWFGVLMIPCLLAAAA), 119–134 (HFLIGISAYMGRQWEL), and 143–157 (WICVAYSAPVSAAFA). A chlorophyll a-binding site is contributed by H119. Y127 is a pheophytin a binding site. [CaMn4O5] cluster contacts are provided by D171 and E190. The chain crosses the membrane as a helical span at residues 198 to 219 (FHMAGVAGMFGGSLFSAMHGSL). H199 lines the chlorophyll a pocket. Residues H216 and 265–266 (SF) contribute to the a quinone site. H216 contacts Fe cation. H273 contributes to the Fe cation binding site. A helical membrane pass occupies residues 275–289 (FLAVFPVVCVWLTSM). [CaMn4O5] cluster contacts are provided by H333, E334, D343, and A345. A propeptide spanning residues 346-360 (AAESTTVALTAPAIG) is cleaved from the precursor.

It belongs to the reaction center PufL/M/PsbA/D family. PSII is composed of 1 copy each of membrane proteins PsbA, PsbB, PsbC, PsbD, PsbE, PsbF, PsbH, PsbI, PsbJ, PsbK, PsbL, PsbM, PsbT, PsbX, PsbY, Psb30/Ycf12, peripheral proteins PsbO, CyanoQ (PsbQ), PsbU, PsbV and a large number of cofactors. It forms dimeric complexes. The D1/D2 heterodimer binds P680, chlorophylls that are the primary electron donor of PSII, and subsequent electron acceptors. It shares a non-heme iron and each subunit binds pheophytin, quinone, additional chlorophylls, carotenoids and lipids. D1 provides most of the ligands for the Mn4-Ca-O5 cluster of the oxygen-evolving complex (OEC). There is also a Cl(-1) ion associated with D1 and D2, which is required for oxygen evolution. The PSII complex binds additional chlorophylls, carotenoids and specific lipids. is required as a cofactor. Post-translationally, tyr-162 forms a radical intermediate that is referred to as redox-active TyrZ, YZ or Y-Z. In terms of processing, C-terminally processed by CtpA; processing is essential to allow assembly of the oxygen-evolving complex and thus photosynthetic growth.

Its subcellular location is the cellular thylakoid membrane. It carries out the reaction 2 a plastoquinone + 4 hnu + 2 H2O = 2 a plastoquinol + O2. Functionally, photosystem II (PSII) is a light-driven water:plastoquinone oxidoreductase that uses light energy to abstract electrons from H(2)O, generating O(2) and a proton gradient subsequently used for ATP formation. It consists of a core antenna complex that captures photons, and an electron transfer chain that converts photonic excitation into a charge separation. The D1/D2 (PsbA/PsbD) reaction center heterodimer binds P680, the primary electron donor of PSII as well as several subsequent electron acceptors. This chain is Photosystem II protein D1, found in Prochlorococcus marinus (strain MIT 9515).